Reading from the N-terminus, the 175-residue chain is UPF0398 protein SPP_0409 (175 aa).

This sequence belongs to the UPF0398 family.

This Streptococcus pneumoniae (strain P1031) protein is UPF0398 protein SPP_0409.